A 106-amino-acid chain; its full sequence is Large ribosomal subunit protein eL42 (106 aa).

The Zn(2+) site is built by C12, C17, C74, and C77.

It belongs to the eukaryotic ribosomal protein eL42 family. In terms of assembly, component of the large ribosomal subunit. Mature ribosomes consist of a small (40S) and a large (60S) subunit. The 40S subunit contains about 32 different proteins and 1 molecule of RNA (18S). The 60S subunit contains 45 different proteins and 3 molecules of RNA (25S, 5.8S and 5S). Requires Zn(2+) as cofactor.

It is found in the cytoplasm. Its function is as follows. Component of the ribosome, a large ribonucleoprotein complex responsible for the synthesis of proteins in the cell. The small ribosomal subunit (SSU) binds messenger RNAs (mRNAs) and translates the encoded message by selecting cognate aminoacyl-transfer RNA (tRNA) molecules. The large subunit (LSU) contains the ribosomal catalytic site termed the peptidyl transferase center (PTC), which catalyzes the formation of peptide bonds, thereby polymerizing the amino acids delivered by tRNAs into a polypeptide chain. The nascent polypeptides leave the ribosome through a tunnel in the LSU and interact with protein factors that function in enzymatic processing, targeting, and the membrane insertion of nascent chains at the exit of the ribosomal tunnel. The protein is Large ribosomal subunit protein eL42 (RPL44) of Candida albicans (strain SC5314 / ATCC MYA-2876) (Yeast).